The chain runs to 167 residues: Large ribosomal subunit protein uL10 (167 aa).

This sequence belongs to the universal ribosomal protein uL10 family. Part of the ribosomal stalk of the 50S ribosomal subunit. The N-terminus interacts with L11 and the large rRNA to form the base of the stalk. The C-terminus forms an elongated spine to which L12 dimers bind in a sequential fashion forming a multimeric L10(L12)X complex.

In terms of biological role, forms part of the ribosomal stalk, playing a central role in the interaction of the ribosome with GTP-bound translation factors. The polypeptide is Large ribosomal subunit protein uL10 (Yersinia enterocolitica serotype O:8 / biotype 1B (strain NCTC 13174 / 8081)).